We begin with the raw amino-acid sequence, 312 residues long: Olfactory receptor 13J1 (312 aa).

Residues 1–25 (MEPLNRTEVSEFFLKGFSGYPALEH) lie on the Extracellular side of the membrane. Asn5 carries an N-linked (GlcNAc...) asparagine glycan. The chain crosses the membrane as a helical span at residues 26–46 (LLFPLCSAMYLVTLLGNTAIM). Residues 47 to 54 (AVSVLDIH) are Cytoplasmic-facing. The chain crosses the membrane as a helical span at residues 55 to 75 (LHTPVYFFLGNLSTLDICYTP). The Extracellular portion of the chain corresponds to 76 to 99 (TFVPLMLVHLLSSRKTISFAVCAI). A disulfide bridge links Cys97 with Cys189. Residues 100–120 (QMCLSLSTGSTECLLLAITAY) traverse the membrane as a helical segment. The Cytoplasmic portion of the chain corresponds to 121–139 (DRYLAICQPLRYHVLMSHR). Residues 140–160 (LCVLLMGAAWVLCLLKSVTEM) traverse the membrane as a helical segment. Topologically, residues 161–197 (VISMRLPFCGHHVVSHFTCKILAVLKLACGNTSVSED) are extracellular. An N-linked (GlcNAc...) asparagine glycan is attached at Asn191. Residues 198–217 (FLLAGSILLLPVPLAFICLS) traverse the membrane as a helical segment. The Cytoplasmic portion of the chain corresponds to 218–237 (YLLILATILRVPSAARCCKA). The chain crosses the membrane as a helical span at residues 238-258 (FSTCLAHLAVVLLFYGTIIFM). Residues 259-271 (YLKPKSKEAHISD) are Extracellular-facing. Residues 272 to 292 (EVFTVLYAMVTTMLNPTIYSL) traverse the membrane as a helical segment. Topologically, residues 293–312 (RNKEVKEAARKVWGRSRASR) are cytoplasmic.

This sequence belongs to the G-protein coupled receptor 1 family.

It is found in the cell membrane. Odorant receptor. The protein is Olfactory receptor 13J1 (OR13J1) of Homo sapiens (Human).